A 468-amino-acid chain; its full sequence is Glutamate--tRNA ligase (468 aa).

5–7 (RIA) contributes to the L-glutamate binding site. The 'HIGH' region motif lies at 8 to 18 (PSPTGDPHVGT). His-15 provides a ligand contact to ATP. Residues Glu-41, 187–191 (YHLAN), and Arg-205 each bind L-glutamate. ATP-binding positions include Glu-208, Leu-236, 243–247 (KISKR), and Lys-246. The 'KMSKS' region signature appears at 243–247 (KISKR). The interaction with tRNA stretch occupies residues 432 to 447 (QPLRAALTGSLETPGL).

This sequence belongs to the class-I aminoacyl-tRNA synthetase family. Glutamate--tRNA ligase type 1 subfamily. As to quaternary structure, monomer.

The protein localises to the cytoplasm. The enzyme catalyses tRNA(Glu) + L-glutamate + ATP = L-glutamyl-tRNA(Glu) + AMP + diphosphate. With respect to regulation, in the absence of bound tRNA, ATP is bound in a non-productive mode, and the enzyme cannot activate amino acids. Its function is as follows. Catalyzes the attachment of glutamate to tRNA(Glu) in a two-step reaction: glutamate is first activated by ATP to form Glu-AMP and then transferred to the acceptor end of tRNA(Glu). The sequence is that of Glutamate--tRNA ligase from Thermus thermophilus (strain ATCC 27634 / DSM 579 / HB8).